We begin with the raw amino-acid sequence, 383 residues long: Acetylornithine deacetylase (383 aa).

Histidine 80 provides a ligand contact to Zn(2+). Residue aspartate 82 is part of the active site. Aspartate 112 provides a ligand contact to Zn(2+). Glutamate 144 is an active-site residue. Glutamate 145, glutamate 169, and histidine 355 together coordinate Zn(2+).

It belongs to the peptidase M20A family. ArgE subfamily. As to quaternary structure, homodimer. Zn(2+) is required as a cofactor. Requires Co(2+) as cofactor. It depends on glutathione as a cofactor.

Its subcellular location is the cytoplasm. The enzyme catalyses N(2)-acetyl-L-ornithine + H2O = L-ornithine + acetate. The protein operates within amino-acid biosynthesis; L-arginine biosynthesis; L-ornithine from N(2)-acetyl-L-ornithine (linear): step 1/1. Functionally, catalyzes the hydrolysis of the amide bond of N(2)-acetylated L-amino acids. Cleaves the acetyl group from N-acetyl-L-ornithine to form L-ornithine, an intermediate in L-arginine biosynthesis pathway, and a branchpoint in the synthesis of polyamines. This Escherichia coli O127:H6 (strain E2348/69 / EPEC) protein is Acetylornithine deacetylase.